Here is a 550-residue protein sequence, read N- to C-terminus: CTP synthase (550 aa).

An amidoligase domain region spans residues 1–272 (MKTKFIFITG…DQKITSFLNL (272 aa)). A CTP-binding site is contributed by Ser14. Ser14 lines the UTP pocket. ATP is bound at residue 15 to 20 (SLGKGL). An L-glutamine-binding site is contributed by Tyr55. Asp72 lines the ATP pocket. Positions 72 and 146 each coordinate Mg(2+). CTP-binding positions include 153 to 155 (DIE), 193 to 198 (KTKPTQ), and Lys229. UTP-binding positions include 193–198 (KTKPTQ) and Lys229. Residues 297-550 (TITIVGKYVG…IHAACNHNKQ (254 aa)) form the Glutamine amidotransferase type-1 domain. Gly359 is an L-glutamine binding site. Cys386 serves as the catalytic Nucleophile; for glutamine hydrolysis. L-glutamine contacts are provided by residues 387–390 (LGMQ), Glu410, and Arg478. Active-site residues include His523 and Glu525.

The protein belongs to the CTP synthase family. As to quaternary structure, homotetramer.

It catalyses the reaction UTP + L-glutamine + ATP + H2O = CTP + L-glutamate + ADP + phosphate + 2 H(+). The enzyme catalyses L-glutamine + H2O = L-glutamate + NH4(+). The catalysed reaction is UTP + NH4(+) + ATP = CTP + ADP + phosphate + 2 H(+). The protein operates within pyrimidine metabolism; CTP biosynthesis via de novo pathway; CTP from UDP: step 2/2. Allosterically activated by GTP, when glutamine is the substrate; GTP has no effect on the reaction when ammonia is the substrate. The allosteric effector GTP functions by stabilizing the protein conformation that binds the tetrahedral intermediate(s) formed during glutamine hydrolysis. Inhibited by the product CTP, via allosteric rather than competitive inhibition. Functionally, catalyzes the ATP-dependent amination of UTP to CTP with either L-glutamine or ammonia as the source of nitrogen. Regulates intracellular CTP levels through interactions with the four ribonucleotide triphosphates. The sequence is that of CTP synthase from Lawsonia intracellularis (strain PHE/MN1-00).